The following is a 218-amino-acid chain: Probable transaldolase (218 aa).

Lys-83 acts as the Schiff-base intermediate with substrate in catalysis.

This sequence belongs to the transaldolase family. Type 3B subfamily.

It localises to the cytoplasm. The catalysed reaction is D-sedoheptulose 7-phosphate + D-glyceraldehyde 3-phosphate = D-erythrose 4-phosphate + beta-D-fructose 6-phosphate. The protein operates within carbohydrate degradation; pentose phosphate pathway; D-glyceraldehyde 3-phosphate and beta-D-fructose 6-phosphate from D-ribose 5-phosphate and D-xylulose 5-phosphate (non-oxidative stage): step 2/3. Its function is as follows. Transaldolase is important for the balance of metabolites in the pentose-phosphate pathway. This chain is Probable transaldolase, found in Kosmotoga olearia (strain ATCC BAA-1733 / DSM 21960 / TBF 19.5.1).